Here is a 98-residue protein sequence, read N- to C-terminus: Plastocyanin (98 aa).

In terms of domain architecture, Plastocyanin-like spans 1–98 (DVTVKLGADS…AGMKGTITVQ (98 aa)). Residues H38, C83, H86, and M91 each coordinate Cu cation.

This sequence belongs to the plastocyanin family. It depends on Cu(2+) as a cofactor.

Its subcellular location is the plastid. It is found in the chloroplast thylakoid membrane. In terms of biological role, participates in electron transfer between P700 and the cytochrome b6-f complex in photosystem I. This chain is Plastocyanin (petE), found in Scenedesmus fuscus (Green alga).